Reading from the N-terminus, the 115-residue chain is Large ribosomal subunit protein bL19 (115 aa).

This sequence belongs to the bacterial ribosomal protein bL19 family.

In terms of biological role, this protein is located at the 30S-50S ribosomal subunit interface and may play a role in the structure and function of the aminoacyl-tRNA binding site. The sequence is that of Large ribosomal subunit protein bL19 from Streptococcus thermophilus (strain CNRZ 1066).